The following is a 307-amino-acid chain: Peroxisomal membrane protein PMP34 (307 aa).

Residues 1-9 (MASVLSYES) lie on the Cytoplasmic side of the membrane. The necessary for targeting to peroxisomes and interaction with PEX19 stretch occupies residues 1–147 (MASVLSYESL…NEDIIPTNYK (147 aa)). 3 Solcar repeats span residues 7-92 (YESL…LKAV), 99-192 (SSTG…LKRQ), and 200-294 (LSSL…LTAA). Residues 10 to 30 (LVHAVAGAVGSVTAMTVFFPL) form a helical membrane-spanning segment. Topologically, residues 31-66 (DTARLRLQVDEKRKSKTTHAVLLEIIKEEGLLAPYR) are lumenal. A helical transmembrane segment spans residues 67–87 (GWFPVISSLCCSNFVYFYTFN). Residues 88-104 (SLKAVWVKGQRSSTGKD) lie on the Cytoplasmic side of the membrane. Residues 105-125 (LVVGFVAGVVNVLLTTPLWVV) form a helical membrane-spanning segment. Topologically, residues 126–160 (NTRLKLQGAKFRNEDIIPTNYKGIIDAFHQIIRDE) are lumenal. The helical transmembrane segment at 161 to 181 (GILALWNGTFPSLLLVFNPAI) threads the bilayer. Over 182–202 (QFMFYEGLKRQLLKKRMKLSS) the chain is Cytoplasmic. The Peroxisome localization signal motif lies at 190–199 (KRQLLKKRMK). A helical transmembrane segment spans residues 203–223 (LDVFIIGAIAKAIATTVTYPM). The Lumenal portion of the chain corresponds to 224–280 (QTVQSILRFGRHRLNPENRTLGSLRNVLSLLHQRVKRFGIMGLYKGLEAKLLQTVLT). Residues 244–307 (LGSLRNVLSL…VMGLKSTHKH (64 aa)) form a necessary for targeting to peroxisomes and interaction with PEX19 region. A helical transmembrane segment spans residues 281-301 (AALMFLVYEKLTAATFTVMGL). At 302 to 307 (KSTHKH) the chain is on the cytoplasmic side.

Belongs to the mitochondrial carrier (TC 2.A.29) family. As to quaternary structure, interacts (via N- and C-terminus peroxisomal targeting regions) with PEX19; the interaction occurs with the newly synthesized SLC25A17 in the cytosol. In terms of tissue distribution, expressed in liver, kidney, heart, spleen, muscle and lung.

The protein resides in the cytoplasm. It localises to the peroxisome membrane. The catalysed reaction is AMP(out) + CoA(in) = AMP(in) + CoA(out). It carries out the reaction 3'-dephospho-CoA(in) + AMP(out) = 3'-dephospho-CoA(out) + AMP(in). It catalyses the reaction acetyl-CoA(in) + AMP(out) = acetyl-CoA(out) + AMP(in). The enzyme catalyses AMP(in) + NAD(+)(out) = AMP(out) + NAD(+)(in). The catalysed reaction is FAD(in) + AMP(out) = FAD(out) + AMP(in). It carries out the reaction FMN(in) + AMP(out) = FMN(out) + AMP(in). It catalyses the reaction AMP(in) + ADP(out) = AMP(out) + ADP(in). The enzyme catalyses adenosine 3',5'-bisphosphate(in) + AMP(out) = adenosine 3',5'-bisphosphate(out) + AMP(in). The catalysed reaction is FAD(in) + CoA(out) = FAD(out) + CoA(in). It carries out the reaction FAD(in) + adenosine 3',5'-bisphosphate(out) = FAD(out) + adenosine 3',5'-bisphosphate(in). It catalyses the reaction FMN(in) + CoA(out) = FMN(out) + CoA(in). The enzyme catalyses FMN(in) + adenosine 3',5'-bisphosphate(out) = FMN(out) + adenosine 3',5'-bisphosphate(in). The catalysed reaction is FAD(out) + NAD(+)(in) = FAD(in) + NAD(+)(out). It carries out the reaction FMN(out) + NAD(+)(in) = FMN(in) + NAD(+)(out). It catalyses the reaction NAD(+)(in) + CoA(out) = NAD(+)(out) + CoA(in). The enzyme catalyses adenosine 3',5'-bisphosphate(out) + NAD(+)(in) = adenosine 3',5'-bisphosphate(in) + NAD(+)(out). The catalysed reaction is FMN(out) + ADP(in) = FMN(in) + ADP(out). It carries out the reaction FAD(out) + ADP(in) = FAD(in) + ADP(out). It catalyses the reaction ADP(out) + CoA(in) = ADP(in) + CoA(out). The enzyme catalyses adenosine 3',5'-bisphosphate(in) + ADP(out) = adenosine 3',5'-bisphosphate(out) + ADP(in). Its function is as follows. Peroxisomal transporter for multiple cofactors like coenzyme A (CoA), flavin adenine dinucleotide (FAD), flavin mononucleotide (FMN) and nucleotide adenosine monophosphate (AMP), and to a lesser extent for nicotinamide adenine dinucleotide (NAD(+)), adenosine diphosphate (ADP) and adenosine 3',5'-diphosphate (PAP). May catalyze the transport of free CoA, FAD and NAD(+) from the cytosol into the peroxisomal matrix by a counter-exchange mechanism. In Mus musculus (Mouse), this protein is Peroxisomal membrane protein PMP34 (Slc25a17).